We begin with the raw amino-acid sequence, 301 residues long: Probable 5-dehydro-4-deoxyglucarate dehydratase (301 aa).

The protein belongs to the DapA family.

The enzyme catalyses 5-dehydro-4-deoxy-D-glucarate + H(+) = 2,5-dioxopentanoate + CO2 + H2O. It functions in the pathway carbohydrate acid metabolism; D-glucarate degradation; 2,5-dioxopentanoate from D-glucarate: step 2/2. The chain is Probable 5-dehydro-4-deoxyglucarate dehydratase from Cereibacter sphaeroides (strain ATCC 17029 / ATH 2.4.9) (Rhodobacter sphaeroides).